The primary structure comprises 208 residues: Protein-L-isoaspartate O-methyltransferase (208 aa).

The active site involves S59.

This sequence belongs to the methyltransferase superfamily. L-isoaspartyl/D-aspartyl protein methyltransferase family.

It is found in the cytoplasm. The enzyme catalyses [protein]-L-isoaspartate + S-adenosyl-L-methionine = [protein]-L-isoaspartate alpha-methyl ester + S-adenosyl-L-homocysteine. Its function is as follows. Catalyzes the methyl esterification of L-isoaspartyl residues in peptides and proteins that result from spontaneous decomposition of normal L-aspartyl and L-asparaginyl residues. It plays a role in the repair and/or degradation of damaged proteins. The sequence is that of Protein-L-isoaspartate O-methyltransferase from Serratia proteamaculans (strain 568).